The sequence spans 508 residues: Photosystem II CP47 reaction center protein (508 aa).

6 helical membrane-spanning segments follow: residues 21–36 (SVHIMHTALVSGWAGS), 101–115 (IVFSGLCFLAAIWHW), 140–156 (GIHLFLSGLACFGFGAF), 203–218 (IAAGTLGILAGLFHLS), 237–252 (VLSSSIAAVFFAAFVV), and 457–472 (SFALLFFFGHIWHGAR).

The protein belongs to the PsbB/PsbC family. PsbB subfamily. In terms of assembly, PSII is composed of 1 copy each of membrane proteins PsbA, PsbB, PsbC, PsbD, PsbE, PsbF, PsbH, PsbI, PsbJ, PsbK, PsbL, PsbM, PsbT, PsbX, PsbY, PsbZ, Psb30/Ycf12, at least 3 peripheral proteins of the oxygen-evolving complex and a large number of cofactors. It forms dimeric complexes. Binds multiple chlorophylls. PSII binds additional chlorophylls, carotenoids and specific lipids. serves as cofactor.

The protein localises to the plastid. It is found in the chloroplast thylakoid membrane. One of the components of the core complex of photosystem II (PSII). It binds chlorophyll and helps catalyze the primary light-induced photochemical processes of PSII. PSII is a light-driven water:plastoquinone oxidoreductase, using light energy to abstract electrons from H(2)O, generating O(2) and a proton gradient subsequently used for ATP formation. The protein is Photosystem II CP47 reaction center protein of Dioscorea elephantipes (Elephant's foot yam).